The sequence spans 875 residues: Alanine--tRNA ligase (875 aa).

Residues H563, H567, C665, and H669 each contribute to the Zn(2+) site.

The protein belongs to the class-II aminoacyl-tRNA synthetase family. The cofactor is Zn(2+).

It is found in the cytoplasm. The catalysed reaction is tRNA(Ala) + L-alanine + ATP = L-alanyl-tRNA(Ala) + AMP + diphosphate. Functionally, catalyzes the attachment of alanine to tRNA(Ala) in a two-step reaction: alanine is first activated by ATP to form Ala-AMP and then transferred to the acceptor end of tRNA(Ala). Also edits incorrectly charged Ser-tRNA(Ala) and Gly-tRNA(Ala) via its editing domain. This Desulfitobacterium hafniense (strain Y51) protein is Alanine--tRNA ligase.